The primary structure comprises 239 residues: MRKYRRILLKISGESLAGESGYGIDAGVLESFADDIKEATDLGAEIALVIGGGNIFRGLSAAAASMDRVQADYMGMLATVINSLALQDALERKGIFTRLVTAIKMEQIAEPFIRRRAVRHLEKGRVVIFGAGTGNPYFTTDTAASLRAIEIEADVIVKGTRVEGVYDSDPEKNPNAEFFPKISYVDVIRKNLRVMDMTAITLCRENTLPIVVMNMNIKGNFTRLLKGEPIGTLVHVGEE.

10–13 (KISG) provides a ligand contact to ATP. Residues 18–23 (GESGYG) form an involved in allosteric activation by GTP region. Residue glycine 52 coordinates UMP. The ATP site is built by glycine 53 and arginine 57. Residues aspartate 72 and 133 to 140 (TGNPYFTT) contribute to the UMP site. The ATP site is built by threonine 160, tyrosine 166, and aspartate 169.

The protein belongs to the UMP kinase family. As to quaternary structure, homohexamer.

It is found in the cytoplasm. The enzyme catalyses UMP + ATP = UDP + ADP. It participates in pyrimidine metabolism; CTP biosynthesis via de novo pathway; UDP from UMP (UMPK route): step 1/1. Allosterically activated by GTP. Inhibited by UTP. Its function is as follows. Catalyzes the reversible phosphorylation of UMP to UDP. This is Uridylate kinase from Chlorobaculum tepidum (strain ATCC 49652 / DSM 12025 / NBRC 103806 / TLS) (Chlorobium tepidum).